Reading from the N-terminus, the 806-residue chain is Plasminogen (806 aa).

The N-terminal stretch at 1–19 (MEYGKVIFLFLLFLKSGQG) is a signal peptide. In terms of domain architecture, PAN spans 20–98 (ESLENYIKTE…RDVVLFEKRI (79 aa)). Disulfide bonds link Cys49–Cys73, Cys53–Cys61, Cys103–Cys181, Cys124–Cys164, Cys152–Cys176, Cys185–Cys262, Cys188–Cys316, Cys206–Cys245, Cys234–Cys257, Cys275–Cys352, Cys296–Cys335, Cys324–Cys347, Cys371–Cys448, Cys392–Cys431, Cys420–Cys443, Cys476–Cys555, Cys497–Cys538, Cys526–Cys550, Cys563–Cys681, Cys573–Cys581, and Cys603–Cys619. Kringle domains are found at residues 102–181 (DCKS…VPEC), 184–262 (ECMH…IPRC), 274–352 (QCLK…IPSC), 370–448 (ECYE…LEKC), and 475–555 (DCMY…IPQC). Residues 577–804 (IVGGCYAQPH…YISWIEDVMK (228 aa)) enclose the Peptidase S1 domain. Position 593 is a phosphoserine (Ser593). Catalysis depends on charge relay system residues His618 and Asp661. Ser684 is subject to Phosphoserine. Cystine bridges form between Cys695-Cys762, Cys725-Cys741, and Cys752-Cys780. Ser756 (charge relay system) is an active-site residue.

The protein belongs to the peptidase S1 family. Plasminogen subfamily. As to quaternary structure, interacts with CSPG4 and AMOT. Interacts (via the Kringle domains) with HRG; the interaction tethers PLG to the cell surface and enhances its activation. Interacts (via Kringle 4 domain) with ADA; the interaction stimulates PLG activation when in complex with DPP4. Angiostatin: Interacts with ATP5F1A; the interaction inhibits most of the angiogenic effects of angiostatin. In terms of processing, in the presence of the inhibitor, the activation involves only cleavage after Arg-576, yielding two chains held together by two disulfide bonds. In the absence of the inhibitor, the activation involves additionally the removal of the activation peptide.

It is found in the secreted. The enzyme catalyses Preferential cleavage: Lys-|-Xaa &gt; Arg-|-Xaa, higher selectivity than trypsin. Converts fibrin into soluble products.. With respect to regulation, converted into plasmin by plasminogen activators, both plasminogen and its activator being bound to fibrin. Activated with catalytic amounts of streptokinase. Plasmin dissolves the fibrin of blood clots and acts as a proteolytic factor in a variety of other processes including embryonic development, tissue remodeling, tumor invasion, and inflammation. In ovulation, weakens the walls of the Graafian follicle. It activates the urokinase-type plasminogen activator, collagenases and several complement zymogens, such as C1, C4 and C5. Cleavage of fibronectin and laminin leads to cell detachment and apoptosis. Also cleaves fibrin, thrombospondin and von Willebrand factor. Its role in tissue remodeling and tumor invasion may be modulated by CSPG4. Binds to cells. The chain is Plasminogen (PLG) from Notamacropus eugenii (Tammar wallaby).